The primary structure comprises 842 residues: Protein P (842 aa).

Positions Met1–Gln177 are terminal protein domain (TP). Residues Asp178–Leu345 are spacer. Positions Phe184–Arg238 are disordered. Polar residues predominate over residues Ser212–Lys228. The polymerase/reverse transcriptase domain (RT) stretch occupies residues Gln346–Gln689. Residues Glu356–Ile599 form the Reverse transcriptase domain. Mg(2+)-binding residues include Asp428, Asp550, and Asp551.

It belongs to the hepadnaviridae P protein family.

The enzyme catalyses DNA(n) + a 2'-deoxyribonucleoside 5'-triphosphate = DNA(n+1) + diphosphate. It carries out the reaction Endonucleolytic cleavage to 5'-phosphomonoester.. Activated by host HSP70 and HSP40 in vitro to be able to bind the epsilon loop of the pgRNA. Because deletion of the RNase H region renders the protein partly chaperone-independent, the chaperones may be needed indirectly to relieve occlusion of the RNA-binding site by this domain. Inhibited by several reverse-transcriptase inhibitors: Lamivudine, Adefovir and Entecavir. Its function is as follows. Multifunctional enzyme that converts the viral RNA genome into dsDNA in viral cytoplasmic capsids. This enzyme displays a DNA polymerase activity that can copy either DNA or RNA templates, and a ribonuclease H (RNase H) activity that cleaves the RNA strand of RNA-DNA heteroduplexes in a partially processive 3'- to 5'-endonucleasic mode. Neo-synthesized pregenomic RNA (pgRNA) are encapsidated together with the P protein, and reverse-transcribed inside the nucleocapsid. Initiation of reverse-transcription occurs first by binding the epsilon loop on the pgRNA genome, and is initiated by protein priming, thereby the 5'-end of (-)DNA is covalently linked to P protein. Partial (+)DNA is synthesized from the (-)DNA template and generates the relaxed circular DNA (RC-DNA) genome. After budding and infection, the RC-DNA migrates in the nucleus, and is converted into a plasmid-like covalently closed circular DNA (cccDNA). The activity of P protein does not seem to be necessary for cccDNA generation, and is presumably released from (+)DNA by host nuclear DNA repair machinery. The protein is Protein P of Hepatitis B virus genotype G (isolate United States/USG17/2002) (HBV-G).